The sequence spans 469 residues: UDP-N-acetylmuramate--L-alanine ligase (469 aa).

112–118 (GTHGKTT) lines the ATP pocket.

It belongs to the MurCDEF family.

The protein localises to the cytoplasm. The enzyme catalyses UDP-N-acetyl-alpha-D-muramate + L-alanine + ATP = UDP-N-acetyl-alpha-D-muramoyl-L-alanine + ADP + phosphate + H(+). It functions in the pathway cell wall biogenesis; peptidoglycan biosynthesis. In terms of biological role, cell wall formation. The sequence is that of UDP-N-acetylmuramate--L-alanine ligase from Methylibium petroleiphilum (strain ATCC BAA-1232 / LMG 22953 / PM1).